Reading from the N-terminus, the 42-residue chain is GFGCPGDAYQCSEHCRALGGGRTGGYCAGPWYLGHPTCTCSF.

Beta-D-GlcNAc-(1-&gt;4)-Mur2Ac(oyl-L-Ala-gamma-D-Glu-L-Lys-D-Ala-D-Ala)-di-trans,octa-cis-undecaprenyl diphosphate is bound by residues Phe-2, Gly-3, Cys-4, and His-14. 3 disulfide bridges follow: Cys-4/Cys-27, Cys-11/Cys-38, and Cys-15/Cys-40. Positions 31–35 (WYLGH) are interaction site with membranes lipids. Beta-D-GlcNAc-(1-&gt;4)-Mur2Ac(oyl-L-Ala-gamma-D-Glu-L-Lys-D-Ala-D-Ala)-di-trans,octa-cis-undecaprenyl diphosphate is bound at residue Cys-38.

Belongs to the invertebrate defensin family.

It is found in the secreted. The protein localises to the target cell membrane. Antimicrobial peptide that acts against Gram-positive bacteria but not against Gram-negative bacteria. It selectively inhibits peptidoglycan biosynthesis through complex formation with the cell wall precursor lipid II (1:1 molar ratio) thus inhibiting cell wall synthesis. It does not disrupt cell membranes. In vivo, is effective against an intraperitoneal infection with S.pneumoniae. In vitro, it shows very low hemolytic and cytolytic activities. The chain is Fungal defensin eurocin from Aspergillus amstelodami.